The following is a 181-amino-acid chain: Trafficking protein particle complex subunit 3-like protein (181 aa).

Cys68 carries the S-palmitoyl cysteine lipid modification.

This sequence belongs to the TRAPP small subunits family. BET3 subfamily. In terms of assembly, homodimer. Component of the multisubunit TRAPP (transport protein particle) complex, which includes at least TRAPPC2, TRAPPC2L, TRAPPC3, TRAPPC3L, TRAPPC4, TRAPPC5, TRAPPC8, TRAPPC9, TRAPPC10, TRAPPC11 and TRAPPC12.

The protein localises to the golgi apparatus. The protein resides in the cis-Golgi network. Its subcellular location is the endoplasmic reticulum. Functionally, may play a role in vesicular transport from endoplasmic reticulum to Golgi. The sequence is that of Trafficking protein particle complex subunit 3-like protein (Trappc3l) from Mus musculus (Mouse).